The chain runs to 200 residues: Coiled-coil domain-containing protein 85B (200 aa).

Residues 57–84 (LQGHLLEIRELKVINQRLQEENQELRDL) adopt a coiled-coil conformation. Residues 178-188 (DGSSSTGSVGS) show a composition bias toward low complexity. Residues 178-200 (DGSSSTGSVGSPDQLHLVCSPDD) are disordered.

It belongs to the CCDC85 family.

It is found in the nucleus. The protein resides in the cytoplasm. Its subcellular location is the cytoskeleton. It localises to the microtubule organizing center. The protein localises to the centrosome. It is found in the cell junction. The protein resides in the adherens junction. Its function is as follows. Functions as a transcriptional repressor. May inhibit the activity of CTNNB1 in a TP53-dependent manner and thus regulate cell growth. May function in adipocyte differentiation, negatively regulating mitotic clonal expansion. Plays a role in cell-cell adhesion and epithelium development through its interaction with proteins of the beta-catenin family. This Danio rerio (Zebrafish) protein is Coiled-coil domain-containing protein 85B (ccdc85b).